A 311-amino-acid polypeptide reads, in one-letter code: CAAX prenyl protease 2 (311 aa).

3 helical membrane-spanning segments follow: residues 14–34 (VATC…PTVI), 51–71 (FICA…ILPI), and 94–114 (VVYP…LKLF). Glu-164 functions as the Proton donor/acceptor in the catalytic mechanism. Residues 173–193 (IPLLLCAGFRINTAIFLCPVL) traverse the membrane as a helical segment. His-198 serves as the catalytic Proton donor/acceptor. Transmembrane regions (helical) follow at residues 219 to 239 (IVGL…FLFI), 244 to 264 (LAAP…VLYA), and 268 to 288 (GLVS…LFPL).

Belongs to the peptidase U48 family. As to expression, expressed in seeds, stems, leaves, flowers and siliques.

The protein resides in the endoplasmic reticulum membrane. It catalyses the reaction Hydrolyzes the peptide bond -P2-(S-farnesyl or geranylgeranyl)C-P1'-P2'-P3'-COOH where P1' and P2' are amino acids with aliphatic sidechains and P3' is any C-terminal residue.. Its activity is regulated as follows. Inhibited in vitro by L-1-tosylamido-2-phenylethyl chloromethyl ketone (TPCK) and N-ethylmaleimide, but not by EDTA. Its function is as follows. Protease involved in the processing of a variety of prenylated proteins containing the C-terminal CAAX motif, where C is a cysteine modified with an isoprenoid lipid, A is an aliphatic amino acid and X is any C-terminal amino acid. Proteolytically removes the C-terminal three residues of farnesylated and geranylated proteins, leaving the prenylated cysteine as the new C-terminus. The substrate specificity is only partially overlapping with that of FACE1. CAAX processing is likely required for subcellular targeting of prenylated proteins to the plasma membrane. The protein is CAAX prenyl protease 2 (FACE2) of Arabidopsis thaliana (Mouse-ear cress).